The following is a 242-amino-acid chain: Required for respiratory growth protein 7, mitochondrial (242 aa).

It belongs to the RRG7 family.

It localises to the mitochondrion. The sequence is that of Required for respiratory growth protein 7, mitochondrial (RRG7) from Saccharomyces cerevisiae (strain ATCC 204508 / S288c) (Baker's yeast).